Here is a 378-residue protein sequence, read N- to C-terminus: 1-acyl-sn-glycerol-3-phosphate acyltransferase delta (378 aa).

Residues 11 to 31 (FLCHLVFCYVFIASGLIINTV) traverse the membrane as a helical segment. The HXXXXD motif motif lies at 96–101 (HKFEID). Helical transmembrane passes span 125–145 (ELAY…VFCS), 307–327 (TLVN…QFLV), and 338–358 (LASF…MIGV).

This sequence belongs to the 1-acyl-sn-glycerol-3-phosphate acyltransferase family.

It localises to the endoplasmic reticulum membrane. It catalyses the reaction a 1-acyl-sn-glycero-3-phosphate + an acyl-CoA = a 1,2-diacyl-sn-glycero-3-phosphate + CoA. The catalysed reaction is (4Z,7Z,10Z,13Z,16Z,19Z)-docosahexaenoyl-CoA + 1-hexadecanoyl-sn-glycero-3-phosphate = 1-hexadecanoyl-2-(4Z,7Z,10Z,13Z,16Z,19Z-docosahexaenoyl)-sn-glycero-3-phosphate + CoA. The enzyme catalyses 1-octadecanoyl-sn-glycero-3-phosphate + (9Z,12Z)-octadecadienoyl-CoA = 1-octadecanoyl-2-(9Z,12Z-octadecadienoyl)-sn-glycero-3-phosphate + CoA. It carries out the reaction 1-octadecanoyl-sn-glycero-3-phosphate + (4Z,7Z,10Z,13Z,16Z,19Z)-docosahexaenoyl-CoA = 1-octadecanoyl-2-(4Z,7Z,10Z,13Z,16Z,19Z-docosahexaenoyl)-sn-glycero-3-phosphate + CoA. It catalyses the reaction (4Z,7Z,10Z,13Z,16Z,19Z)-docosahexaenoyl-CoA + 1-(9Z-octadecenoyl)-sn-glycero-3-phosphate = 1-(9Z-octadecenoyl)-2-(4Z,7Z,10Z,13Z,16Z,19Z-docosahexaenoyl)-sn-glycero-3-phosphate + CoA. It functions in the pathway phospholipid metabolism; CDP-diacylglycerol biosynthesis; CDP-diacylglycerol from sn-glycerol 3-phosphate: step 2/3. Converts 1-acyl-sn-glycerol-3-phosphate (lysophosphatidic acid or LPA) into 1,2-diacyl-sn-glycerol-3-phosphate (phosphatidic acid or PA) by incorporating an acyl moiety at the sn-2 position of the glycerol backbone. Exhibits high acyl-CoA specificity for polyunsaturated fatty acyl-CoA, especially docosahexaenoyl-CoA (22:6-CoA, DHA-CoA). The polypeptide is 1-acyl-sn-glycerol-3-phosphate acyltransferase delta (AGPAT4) (Macaca fascicularis (Crab-eating macaque)).